Here is a 264-residue protein sequence, read N- to C-terminus: Putative [LysW]-aminoadipate/[LysW]-glutamate kinase (264 aa).

Residues 34–35, R61, and N169 each bind substrate; that span reads GG.

The protein belongs to the acetylglutamate kinase family. LysZ subfamily.

The protein localises to the cytoplasm. It catalyses the reaction [amino-group carrier protein]-C-terminal-N-(1,4-dicarboxybutan-1-yl)-L-glutamine + ATP = [amino-group carrier protein]-C-terminal-N-(1-carboxy-5-phosphooxy-5-oxopentan-1-yl)-L-glutamine + ADP. The catalysed reaction is [amino-group carrier protein]-C-terminal-gamma-(L-glutamyl)-L-glutamate + ATP = [amino-group carrier protein]-C-terminal-gamma-(5-phospho-L-glutamyl)-L-glutamate + ADP. It participates in amino-acid biosynthesis; L-lysine biosynthesis via AAA pathway; L-lysine from L-alpha-aminoadipate (Thermus route): step 2/5. The protein operates within amino-acid biosynthesis; L-arginine biosynthesis. Functionally, involved in both the arginine and lysine biosynthetic pathways. Phosphorylates the LysW-bound precursors glutamate (for arginine biosynthesis), respectively alpha-aminoadipate (for lysine biosynthesis). This chain is Putative [LysW]-aminoadipate/[LysW]-glutamate kinase, found in Ignicoccus hospitalis (strain KIN4/I / DSM 18386 / JCM 14125).